The following is a 1206-amino-acid chain: uncharacterized protein (1206 aa).

Disordered stretches follow at residues 133–547, 568–837, and 859–1206; these read YDLD…PVDY, FASS…DQLL, and RQRA…KATS. Composition is skewed to pro residues over residues 139–151 and 159–234; these read IPPP…PGPP and GESP…PPAP. Serine 255 is modified (phosphoserine). The span at 305–319 shows a compositional bias: low complexity; that stretch reads VRTSSIPVQEAPGAS. A compositionally biased stretch (basic and acidic residues) spans 351-363; sequence RALEPEQPREPRP. Residues 384-413 show a composition bias toward pro residues; it reads APPPAPPLPPPAPPLPPPAPSLPPAAPPLP. Residues 414-436 show a composition bias toward low complexity; sequence STELAAPPSSGFMKTSKSNSPAL. Over residues 454 to 467 the composition is skewed to basic and acidic residues; sequence VDWRDPRQMEKLRS. Residues 522 to 531 are compositionally biased toward low complexity; sequence PEKSPSSSSL. Positions 568-577 are enriched in basic and acidic residues; that stretch reads FASSAEKEAK. Residues 656–671 show a composition bias toward low complexity; that stretch reads LPKATPGLTLPLKPTP. Threonine 680 is subject to Phosphothreonine. Residues 732–747 show a composition bias toward basic and acidic residues; the sequence is AEKDLASVRQREKPET. The segment covering 1001 to 1016 has biased composition (pro residues); it reads IPPPPEFSNDPEPPAP. The span at 1028 to 1041 shows a compositional bias: polar residues; the sequence is PRNNFSDLGQSWGP. Omega-N-methylarginine occurs at positions 1051, 1083, and 1094. The segment covering 1170–1184 has biased composition (polar residues); it reads PHGNTHYGSPINTFT.

This is an uncharacterized protein from Mus musculus (Mouse).